We begin with the raw amino-acid sequence, 340 residues long: Glyceraldehyde-3-phosphate dehydrogenase (340 aa).

NAD(+) contacts are provided by residues 11–12 (TI) and G109. A disulfide bond links C123 and C149. 138 to 140 (SCN) lines the D-glyceraldehyde 3-phosphate pocket. C139 acts as the Nucleophile in catalysis. NAD(+) is bound at residue R167. 193 to 194 (HA) contacts D-glyceraldehyde 3-phosphate. Q300 provides a ligand contact to NAD(+).

The protein belongs to the glyceraldehyde-3-phosphate dehydrogenase family. Homotetramer.

It localises to the cytoplasm. The catalysed reaction is D-glyceraldehyde 3-phosphate + phosphate + NADP(+) = (2R)-3-phospho-glyceroyl phosphate + NADPH + H(+). The enzyme catalyses D-glyceraldehyde 3-phosphate + phosphate + NAD(+) = (2R)-3-phospho-glyceroyl phosphate + NADH + H(+). The protein operates within carbohydrate degradation; glycolysis; pyruvate from D-glyceraldehyde 3-phosphate: step 1/5. Can use both NAD and NADP as cofactors, but exhibits a marked preference for NADP. This chain is Glyceraldehyde-3-phosphate dehydrogenase (gap), found in Saccharolobus solfataricus (strain ATCC 35092 / DSM 1617 / JCM 11322 / P2) (Sulfolobus solfataricus).